The following is a 466-amino-acid chain: Methylenetetrahydrofolate--tRNA-(uracil-5-)-methyltransferase TrmFO (466 aa).

FAD is bound at residue 16–21; the sequence is GGGMAG.

Belongs to the MnmG family. TrmFO subfamily. Requires FAD as cofactor.

The protein resides in the cytoplasm. It catalyses the reaction uridine(54) in tRNA + (6R)-5,10-methylene-5,6,7,8-tetrahydrofolate + NADH + H(+) = 5-methyluridine(54) in tRNA + (6S)-5,6,7,8-tetrahydrofolate + NAD(+). It carries out the reaction uridine(54) in tRNA + (6R)-5,10-methylene-5,6,7,8-tetrahydrofolate + NADPH + H(+) = 5-methyluridine(54) in tRNA + (6S)-5,6,7,8-tetrahydrofolate + NADP(+). Functionally, catalyzes the folate-dependent formation of 5-methyl-uridine at position 54 (M-5-U54) in all tRNAs. This is Methylenetetrahydrofolate--tRNA-(uracil-5-)-methyltransferase TrmFO from Maricaulis maris (strain MCS10) (Caulobacter maris).